The following is a 294-amino-acid chain: Phosphatidylglycerol--prolipoprotein diacylglyceryl transferase (294 aa).

A run of 7 helical transmembrane segments spans residues 19 to 39 (VFGF…GIVL), 69 to 89 (LLTW…VFFY), 101 to 121 (ILAV…VIAA), 139 to 159 (IMAL…FINA), 195 to 215 (QLYE…WLVW), 224 to 244 (GYVA…VEFF), and 267 to 287 (WGLT…IWLI). Arg-152 serves as a coordination point for a 1,2-diacyl-sn-glycero-3-phospho-(1'-sn-glycerol).

The protein belongs to the Lgt family.

The protein resides in the cell inner membrane. It catalyses the reaction L-cysteinyl-[prolipoprotein] + a 1,2-diacyl-sn-glycero-3-phospho-(1'-sn-glycerol) = an S-1,2-diacyl-sn-glyceryl-L-cysteinyl-[prolipoprotein] + sn-glycerol 1-phosphate + H(+). The protein operates within protein modification; lipoprotein biosynthesis (diacylglyceryl transfer). In terms of biological role, catalyzes the transfer of the diacylglyceryl group from phosphatidylglycerol to the sulfhydryl group of the N-terminal cysteine of a prolipoprotein, the first step in the formation of mature lipoproteins. The protein is Phosphatidylglycerol--prolipoprotein diacylglyceryl transferase of Roseobacter denitrificans (strain ATCC 33942 / OCh 114) (Erythrobacter sp. (strain OCh 114)).